Consider the following 535-residue polypeptide: Bifunctional purine biosynthesis protein PurH (535 aa).

The 146-residue stretch at 6-151 (TRLPVRRALI…KNHKDVAIVV (146 aa)) folds into the MGS-like domain.

This sequence belongs to the PurH family.

It carries out the reaction (6R)-10-formyltetrahydrofolate + 5-amino-1-(5-phospho-beta-D-ribosyl)imidazole-4-carboxamide = 5-formamido-1-(5-phospho-D-ribosyl)imidazole-4-carboxamide + (6S)-5,6,7,8-tetrahydrofolate. The enzyme catalyses IMP + H2O = 5-formamido-1-(5-phospho-D-ribosyl)imidazole-4-carboxamide. The protein operates within purine metabolism; IMP biosynthesis via de novo pathway; 5-formamido-1-(5-phospho-D-ribosyl)imidazole-4-carboxamide from 5-amino-1-(5-phospho-D-ribosyl)imidazole-4-carboxamide (10-formyl THF route): step 1/1. It participates in purine metabolism; IMP biosynthesis via de novo pathway; IMP from 5-formamido-1-(5-phospho-D-ribosyl)imidazole-4-carboxamide: step 1/1. This Ectopseudomonas mendocina (strain ymp) (Pseudomonas mendocina) protein is Bifunctional purine biosynthesis protein PurH.